The primary structure comprises 156 residues: D-aminoacyl-tRNA deacylase (156 aa).

The Gly-cisPro motif, important for rejection of L-amino acids signature appears at Gly-137 to Pro-138.

This sequence belongs to the DTD family. Homodimer.

Its subcellular location is the cytoplasm. It catalyses the reaction glycyl-tRNA(Ala) + H2O = tRNA(Ala) + glycine + H(+). The enzyme catalyses a D-aminoacyl-tRNA + H2O = a tRNA + a D-alpha-amino acid + H(+). In terms of biological role, an aminoacyl-tRNA editing enzyme that deacylates mischarged D-aminoacyl-tRNAs. Also deacylates mischarged glycyl-tRNA(Ala), protecting cells against glycine mischarging by AlaRS. Acts via tRNA-based rather than protein-based catalysis; rejects L-amino acids rather than detecting D-amino acids in the active site. By recycling D-aminoacyl-tRNA to D-amino acids and free tRNA molecules, this enzyme counteracts the toxicity associated with the formation of D-aminoacyl-tRNA entities in vivo and helps enforce protein L-homochirality. This Dictyoglomus turgidum (strain DSM 6724 / Z-1310) protein is D-aminoacyl-tRNA deacylase.